Consider the following 311-residue polypeptide: MVTWIRGEGLHRQAKEWAREHVKRLEEVGITPKLAIILLNDDPVELATQRRFASLKARDVREVGGEAEIYELHDVPPERRTKEALRLIESLNKRDDVTGVIIQKPVPPFVDERALFAALSPEKDVDALTPDNKKRLLDRFDLDNDVLPCTPAGILELFRMYGIEIRGKDVVVVGKGELVGKPLSVMLMQLDATVTVLHALSKEREPYVKRADIVISAVGRPPEIYRDNPWRLTGEMIKEGVVVVGVGGKVDPISGKWHFDVDEKSVAEKASYLTPNIGGVGLATRARVLKNLIRTSYQVARLVVSSRIVGP.

NADP(+) is bound at residue 174–176; the sequence is GKG.

This sequence belongs to the tetrahydrofolate dehydrogenase/cyclohydrolase family. Homodimer.

The catalysed reaction is (6R)-5,10-methylene-5,6,7,8-tetrahydrofolate + NADP(+) = (6R)-5,10-methenyltetrahydrofolate + NADPH. It catalyses the reaction (6R)-5,10-methenyltetrahydrofolate + H2O = (6R)-10-formyltetrahydrofolate + H(+). It participates in one-carbon metabolism; tetrahydrofolate interconversion. In terms of biological role, catalyzes the oxidation of 5,10-methylenetetrahydrofolate to 5,10-methenyltetrahydrofolate and then the hydrolysis of 5,10-methenyltetrahydrofolate to 10-formyltetrahydrofolate. This Pyrobaculum arsenaticum (strain DSM 13514 / JCM 11321 / PZ6) protein is Bifunctional protein FolD.